We begin with the raw amino-acid sequence, 65 residues long: Alpha-like toxin Bom4 (65 aa).

The LCN-type CS-alpha/beta domain maps to R2–H64. 4 cysteine pairs are disulfide-bonded: C12–C63, C16–C36, C22–C46, and C26–C48.

It belongs to the long (4 C-C) scorpion toxin superfamily. Sodium channel inhibitor family. Alpha subfamily. As to expression, expressed by the venom gland.

It localises to the secreted. In terms of biological role, alpha toxins bind voltage-independently at site-3 of sodium channels (Nav) and inhibit the inactivation of the activated channels, thereby blocking neuronal transmission. This alpha-like toxin is highly toxic to mice and insects. The protein is Alpha-like toxin Bom4 of Buthus occitanus mardochei (Moroccan scorpion).